The chain runs to 168 residues: Nucleoside deoxyribosyltransferase (168 aa).

The Nucleophile role is filled by Glu103.

It belongs to the nucleoside deoxyribosyltransferase family.

It catalyses the reaction 2-deoxy-D-ribosyl-base(1) + base(2) = 2-deoxy-D-ribosyl-base(2) + base(1).. It functions in the pathway nucleotide metabolism; nucleotide salvage pathway. Catalyzes the cleavage of the glycosidic bond of 2'-deoxyribonucleosides and the transfer of the deoxyribosyl moiety to an acceptor purine or pyrimidine base. The chain is Nucleoside deoxyribosyltransferase (ntd) from Limosilactobacillus fermentum (Lactobacillus fermentum).